The primary structure comprises 137 residues: uncharacterized protein (137 aa).

Positions 1-10 (MISVDVPGHP) are enriched in low complexity. Positions 1–23 (MISVDVPGHPGDAGGGGGGARKV) are disordered. Positions 11-20 (GDAGGGGGGA) are enriched in gly residues.

This is an uncharacterized protein from Human adenovirus C serotype 2 (HAdV-2).